Reading from the N-terminus, the 265-residue chain is Protein synthesis inhibitor PD-S2 (265 aa).

2 cysteine pairs are disulfide-bonded: cysteine 34–cysteine 262 and cysteine 88–cysteine 110. A glycan (N-linked (GlcNAc...) asparagine) is linked at asparagine 120.

The protein belongs to the ribosome-inactivating protein family. Type 1 RIP subfamily. Glycosylated. Seeds.

The catalysed reaction is Endohydrolysis of the N-glycosidic bond at one specific adenosine on the 28S rRNA.. Functionally, inhibits protein synthesis in animal cells. Useful as immunotoxin for pharmacological applications. This chain is Protein synthesis inhibitor PD-S2, found in Phytolacca dioica (Bella sombra tree).